A 319-amino-acid polypeptide reads, in one-letter code: Lipoyl synthase (319 aa).

A disordered region spans residues 1-29 (MVVVVDTVSDKPIRPRHPEKAARPDALSP). Basic and acidic residues predominate over residues 8 to 29 (VSDKPIRPRHPEKAARPDALSP). [4Fe-4S] cluster is bound by residues Cys-61, Cys-66, Cys-72, Cys-87, Cys-91, Cys-94, and Ser-300. In terms of domain architecture, Radical SAM core spans 73-289 (WDRKHATFMI…ESLAYAKGFL (217 aa)).

This sequence belongs to the radical SAM superfamily. Lipoyl synthase family. The cofactor is [4Fe-4S] cluster.

The protein resides in the cytoplasm. It carries out the reaction [[Fe-S] cluster scaffold protein carrying a second [4Fe-4S](2+) cluster] + N(6)-octanoyl-L-lysyl-[protein] + 2 oxidized [2Fe-2S]-[ferredoxin] + 2 S-adenosyl-L-methionine + 4 H(+) = [[Fe-S] cluster scaffold protein] + N(6)-[(R)-dihydrolipoyl]-L-lysyl-[protein] + 4 Fe(3+) + 2 hydrogen sulfide + 2 5'-deoxyadenosine + 2 L-methionine + 2 reduced [2Fe-2S]-[ferredoxin]. It participates in protein modification; protein lipoylation via endogenous pathway; protein N(6)-(lipoyl)lysine from octanoyl-[acyl-carrier-protein]: step 2/2. Its function is as follows. Catalyzes the radical-mediated insertion of two sulfur atoms into the C-6 and C-8 positions of the octanoyl moiety bound to the lipoyl domains of lipoate-dependent enzymes, thereby converting the octanoylated domains into lipoylated derivatives. This chain is Lipoyl synthase, found in Rhodopseudomonas palustris (strain BisA53).